Reading from the N-terminus, the 1122-residue chain is TSET complex member tstF (1122 aa).

The segment covering 88-126 has biased composition (low complexity); the sequence is SSSASGINGTNNNNSGSNSSNNNNNNNGSLSNSPNNNNN. Disordered stretches follow at residues 88-131 and 178-215; these read SSSA…AFIG and QTLH…STNS. Polar residues predominate over residues 178–190; sequence QTLHNRSPNNTIK. The segment covering 191–215 has biased composition (low complexity); the sequence is LSPNSSNNDSLNNNNNNINNNSTNS. 3 WD repeats span residues 298–337, 342–381, and 383–422; these read FENK…IEKQ, PKGT…LATQ, and SKVH…EVSK. The interval 731–775 is disordered; that stretch reads NGSVGGSSSNNSANSNNSNNNNNNNNNNSNNSNNNNNSSQPILEP.

Component of the TSET complex, a heterohexamer composed of tstA, tstB, tstC, tstD, tstE and tstF, which may act in plasma membrane turnover. tstA, tstB, tstC and tstD are likely to be the core complex members with tstE and tstF acting as associated scaffold proteins.

The chain is TSET complex member tstF from Dictyostelium discoideum (Social amoeba).